A 435-amino-acid polypeptide reads, in one-letter code: Glutamyl-tRNA reductase (435 aa).

Residues 49–52 (TCNR), serine 109, 114–116 (EGQ), and glutamine 120 each bind substrate. The active-site Nucleophile is cysteine 50. Residue 198–203 (GAGRMS) coordinates NADP(+).

Belongs to the glutamyl-tRNA reductase family. Homodimer.

It carries out the reaction (S)-4-amino-5-oxopentanoate + tRNA(Glu) + NADP(+) = L-glutamyl-tRNA(Glu) + NADPH + H(+). The protein operates within porphyrin-containing compound metabolism; protoporphyrin-IX biosynthesis; 5-aminolevulinate from L-glutamyl-tRNA(Glu): step 1/2. It functions in the pathway porphyrin-containing compound metabolism; chlorophyll biosynthesis. In terms of biological role, catalyzes the NADPH-dependent reduction of glutamyl-tRNA(Glu) to glutamate 1-semialdehyde (GSA). The chain is Glutamyl-tRNA reductase from Prochlorococcus marinus (strain MIT 9211).